The sequence spans 170 residues: Disulfide bond formation protein B 1 (170 aa).

Topologically, residues 1–14 (MNDYTLAIRRERRL) are cytoplasmic. The chain crosses the membrane as a helical span at residues 15–31 (LMLLGWVCIALLAGALY). Over 32–49 (LQYVKNEDPCPLCIIQRY) the chain is Periplasmic. A disulfide bridge links C41 with C44. A helical transmembrane segment spans residues 50 to 64 (FFCAIGIFAFLAAGI). The Cytoplasmic portion of the chain corresponds to 65 to 71 (RNWRGVW). The chain crosses the membrane as a helical span at residues 72–89 (VLELLIAIAAAGGVGTAA). At 90–144 (RHLTIQMNPGFSCGFDTLQPIVDSLPPAQWFPGMFKVAGLCETVYPPIFGILLPG) the chain is on the periplasmic side. A disulfide bond links C102 and C130. The chain crosses the membrane as a helical span at residues 145-163 (WSLIGFAVILIAVVASLWR). Residues 164–170 (HRRKLVG) lie on the Cytoplasmic side of the membrane.

Belongs to the DsbB family.

Its subcellular location is the cell inner membrane. Functionally, required for disulfide bond formation in some periplasmic proteins. Acts by oxidizing the DsbA protein. This Burkholderia lata (strain ATCC 17760 / DSM 23089 / LMG 22485 / NCIMB 9086 / R18194 / 383) protein is Disulfide bond formation protein B 1.